A 520-amino-acid polypeptide reads, in one-letter code: Amine oxidase [flavin-containing] B (520 aa).

Ser-2 is modified (N-acetylserine). Residues 2-489 (SNKCDVIVVG…TFLERHLPSV (488 aa)) are Cytoplasmic-facing. Lys-52 bears the N6-acetyllysine mark. S-8alpha-FAD cysteine is present on Cys-397. Residues 490-516 (PGLLKLLGLTTILSATALGFLAHKKGL) form a helical; Anchor for type IV membrane protein membrane-spanning segment. Over 517–520 (FVRF) the chain is Mitochondrial intermembrane.

Belongs to the flavin monoamine oxidase family. As to quaternary structure, monomer, homo- or heterodimer (containing two subunits of similar size). Each subunit contains a covalently bound flavin. Enzymatically active as monomer. It depends on FAD as a cofactor.

The protein resides in the mitochondrion outer membrane. The catalysed reaction is a secondary aliphatic amine + O2 + H2O = a primary amine + an aldehyde + H2O2. It carries out the reaction (R)-adrenaline + O2 + H2O = (R)-3,4-dihydroxymandelaldehyde + methylamine + H2O2. The enzyme catalyses a primary methyl amine + O2 + H2O = an aldehyde + H2O2 + NH4(+). It catalyses the reaction dopamine + O2 + H2O = 3,4-dihydroxyphenylacetaldehyde + H2O2 + NH4(+). The catalysed reaction is tyramine + O2 + H2O = (4-hydroxyphenyl)acetaldehyde + H2O2 + NH4(+). It carries out the reaction (R)-noradrenaline + O2 + H2O = (R)-3,4-dihydroxymandelaldehyde + H2O2 + NH4(+). The enzyme catalyses benzylamine + O2 + H2O = benzaldehyde + H2O2 + NH4(+). It catalyses the reaction 2-phenylethylamine + O2 + H2O = 2-phenylacetaldehyde + H2O2 + NH4(+). The catalysed reaction is N-acetylputrescine + O2 + H2O = 4-acetamidobutanal + H2O2 + NH4(+). In terms of biological role, catalyzes the oxidative deamination of primary and some secondary amines such as neurotransmitters, and exogenous amines including the tertiary amine, neurotoxin 1-methyl-4-phenyl-1,2,3,6-tetrahydropyridine (MPTP), with concomitant reduction of oxygen to hydrogen peroxide and participates in the metabolism of neuroactive and vasoactive amines in the central nervous system and peripheral tissues. Preferentially degrades benzylamine and phenylethylamine. The protein is Amine oxidase [flavin-containing] B of Rattus norvegicus (Rat).